Reading from the N-terminus, the 389-residue chain is Probable nitrate transporter NarT (389 aa).

12 helical membrane-spanning segments follow: residues 14–34 (TLSL…MPFI), 45–65 (ISII…PFGY), 69–89 (IVGA…PIFF), 97–117 (GMLM…SVGV), 139–159 (GNIG…IIGW), 161–181 (TTVR…FIFG), 211–231 (WYFI…NYLV), 246–266 (GVFI…GDKF), 268–288 (AVKV…ILGI), 294–314 (LFTV…GLIF), 331–351 (IVSM…TYVA), and 353–373 (LTGS…IALF).

The protein belongs to the major facilitator superfamily. Nitrate/nitrite porter (TC 2.A.1.8) family.

It localises to the cell membrane. Its function is as follows. Probably required for nitrate uptake under anoxic conditions. Also possibly involved in excretion of nitrite produced by the dissimilatory reduction of nitrate. In Staphylococcus aureus (strain bovine RF122 / ET3-1), this protein is Probable nitrate transporter NarT (narT).